Reading from the N-terminus, the 137-residue chain is MAEFELEVLQPERVFFKDNVEMIVLRTIDGEIGIMANHQPIVVPIGIGKLRIKKDGKWREAAIAGGLLEVKNNKATILSDAVEWPEEIDRQRALLAKERAEKRLEQKLPPDEYERYRAALYRALNRLKLAEENKEEI.

This sequence belongs to the ATPase epsilon chain family. As to quaternary structure, F-type ATPases have 2 components, CF(1) - the catalytic core - and CF(0) - the membrane proton channel. CF(1) has five subunits: alpha(3), beta(3), gamma(1), delta(1), epsilon(1). CF(0) has three main subunits: a, b and c.

Its subcellular location is the cell membrane. In terms of biological role, produces ATP from ADP in the presence of a proton gradient across the membrane. The polypeptide is ATP synthase epsilon chain (Caldicellulosiruptor bescii (strain ATCC BAA-1888 / DSM 6725 / KCTC 15123 / Z-1320) (Anaerocellum thermophilum)).